A 250-amino-acid chain; its full sequence is L-cystine transport system ATP-binding protein TcyN (250 aa).

One can recognise an ABC transporter domain in the interval Ile-4 to Leu-244. Residue Gly-36–Thr-43 participates in ATP binding.

It belongs to the ABC transporter superfamily. In terms of assembly, the complex is composed of two ATP-binding proteins (TcyN), two transmembrane proteins (TcyL) and a solute-binding protein (TcyJ).

The protein localises to the cell inner membrane. It catalyses the reaction L-cystine(out) + ATP + H2O = L-cystine(in) + ADP + phosphate + H(+). The enzyme catalyses D-cystine(out) + ATP + H2O = D-cystine(in) + ADP + phosphate + H(+). Its activity is regulated as follows. The TcyJLN system is inhibited by L-cystine, L-cysteine, DL-2,6-diaminopimelic acid and L-cystathionine, and is stimulated by D-cysteine. In terms of biological role, part of the ABC transporter complex TcyJLN involved in L-cystine import. This high affinity cystine transporter is involved in resistance to oxidative stress by forming a L-cysteine/L-cystine shuttle system with the EamA transporter, which exports L-cysteine as reducing equivalents to the periplasm to prevent the cells from oxidative stress. Exported L-cysteine can reduce the periplasmic hydrogen peroxide to water, and then generated L-cystine is imported back into the cytoplasm via the TcyJLN complex. Functions at low cystine concentrations. The system can also transport L-cysteine, diaminopimelic acid (DAP), djenkolate, lanthionine, D-cystine, homocystine, and it mediates accumulation of the toxic compounds L-selenaproline (SCA) and L-selenocystine (SeCys). Could also facilitate threonine efflux. Responsible for energy coupling to the transport system. In Escherichia coli (strain K12), this protein is L-cystine transport system ATP-binding protein TcyN.